The following is a 642-amino-acid chain: Probable Xaa-Pro aminopeptidase P (642 aa).

Mn(2+)-binding residues include aspartate 439, aspartate 450, glutamate 548, and glutamate 562.

This sequence belongs to the peptidase M24B family. Requires Mn(2+) as cofactor.

It catalyses the reaction Release of any N-terminal amino acid, including proline, that is linked to proline, even from a dipeptide or tripeptide.. Its function is as follows. Catalyzes the removal of a penultimate prolyl residue from the N-termini of peptides. The protein is Probable Xaa-Pro aminopeptidase P (AMPP) of Laccaria bicolor (strain S238N-H82 / ATCC MYA-4686) (Bicoloured deceiver).